A 361-amino-acid polypeptide reads, in one-letter code: Uroporphyrinogen decarboxylase (361 aa).

Residues R44–R48, D93, Y168, S223, and H337 each bind substrate.

Belongs to the uroporphyrinogen decarboxylase family. Homodimer.

The protein resides in the cytoplasm. It carries out the reaction uroporphyrinogen III + 4 H(+) = coproporphyrinogen III + 4 CO2. It participates in porphyrin-containing compound metabolism; protoporphyrin-IX biosynthesis; coproporphyrinogen-III from 5-aminolevulinate: step 4/4. Catalyzes the decarboxylation of four acetate groups of uroporphyrinogen-III to yield coproporphyrinogen-III. The sequence is that of Uroporphyrinogen decarboxylase from Thermobifida fusca (strain YX).